A 125-amino-acid chain; its full sequence is MALKDTAKKMTDLLESIQQNLLKAEKGNKAAAQRVRTESIKLEKIAKVYRKESIKAEKMGLMKRSKVAAKKAKAAAKKPAKATKVVTKKACTKKTCATKAKAKPVKKAATKTKAKVTKKVRSTKK.

Belongs to the histone H1/H5 family. HCT subfamily.

Functionally, might have a role analogous to that of eukaryotic histone proteins. This chain is Histone H1-like protein HC1 (hctA), found in Chlamydia muridarum (strain MoPn / Nigg).